The chain runs to 168 residues: Photosystem I assembly protein Ycf3 (168 aa).

TPR repeat units follow at residues 35-68, 72-105, and 120-153; these read AFTY…EIDP, SYIL…NPFL, and GEQA…TPGN.

This sequence belongs to the Ycf3 family.

It localises to the plastid. Its subcellular location is the chloroplast thylakoid membrane. Functionally, essential for the assembly of the photosystem I (PSI) complex. May act as a chaperone-like factor to guide the assembly of the PSI subunits. This is Photosystem I assembly protein Ycf3 from Illicium oligandrum (Star anise).